The following is a 272-amino-acid chain: tRNA uridine(34) hydroxylase (272 aa).

The region spanning 121–217 (SRSDVYTIDT…YFKSTGNINN (97 aa)) is the Rhodanese domain. Cysteine 177 (cysteine persulfide intermediate) is an active-site residue.

The protein belongs to the TrhO family.

It carries out the reaction uridine(34) in tRNA + AH2 + O2 = 5-hydroxyuridine(34) in tRNA + A + H2O. Its function is as follows. Catalyzes oxygen-dependent 5-hydroxyuridine (ho5U) modification at position 34 in tRNAs. The chain is tRNA uridine(34) hydroxylase from Ehrlichia ruminantium (strain Welgevonden).